The sequence spans 476 residues: Cysteine--tRNA ligase (476 aa).

Residue cysteine 29 participates in Zn(2+) binding. The 'HIGH' region signature appears at 31–41; it reads PTVYDYPHLGH. Residues cysteine 209, histidine 234, and glutamate 238 each contribute to the Zn(2+) site. The short motif at 266 to 270 is the 'KMSKS' region element; that stretch reads KMSKS. Lysine 269 lines the ATP pocket.

It belongs to the class-I aminoacyl-tRNA synthetase family. Requires Zn(2+) as cofactor.

Its subcellular location is the cytoplasm. The catalysed reaction is tRNA(Cys) + L-cysteine + ATP = L-cysteinyl-tRNA(Cys) + AMP + diphosphate. The chain is Cysteine--tRNA ligase (cysS) from Pyrococcus horikoshii (strain ATCC 700860 / DSM 12428 / JCM 9974 / NBRC 100139 / OT-3).